We begin with the raw amino-acid sequence, 379 residues long: 3-isopropylmalate dehydrogenase 1 (379 aa).

Substrate-binding residues include Arg-101, Arg-111, Arg-139, and Asp-230. Mg(2+) is bound by residues Asp-230, Asp-254, and Asp-258. NAD(+) is bound at residue 293–305 (GSAPDIAGKGIAN).

It belongs to the isocitrate and isopropylmalate dehydrogenases family. LeuB type 1 subfamily. Homodimer. Mg(2+) serves as cofactor. Requires Mn(2+) as cofactor.

The protein resides in the cytoplasm. The enzyme catalyses (2R,3S)-3-isopropylmalate + NAD(+) = 4-methyl-2-oxopentanoate + CO2 + NADH. Its pathway is amino-acid biosynthesis; L-leucine biosynthesis; L-leucine from 3-methyl-2-oxobutanoate: step 3/4. Its function is as follows. Catalyzes the oxidation of 3-carboxy-2-hydroxy-4-methylpentanoate (3-isopropylmalate) to 3-carboxy-4-methyl-2-oxopentanoate. The product decarboxylates to 4-methyl-2 oxopentanoate. This Bradyrhizobium diazoefficiens (strain JCM 10833 / BCRC 13528 / IAM 13628 / NBRC 14792 / USDA 110) protein is 3-isopropylmalate dehydrogenase 1.